The chain runs to 434 residues: Serine hydroxymethyltransferase (434 aa).

Residues Leu132 and 136-138 (GHL) contribute to the (6S)-5,6,7,8-tetrahydrofolate site. N6-(pyridoxal phosphate)lysine is present on Lys241.

It belongs to the SHMT family. As to quaternary structure, homodimer. It depends on pyridoxal 5'-phosphate as a cofactor.

Its subcellular location is the cytoplasm. It carries out the reaction (6R)-5,10-methylene-5,6,7,8-tetrahydrofolate + glycine + H2O = (6S)-5,6,7,8-tetrahydrofolate + L-serine. It functions in the pathway one-carbon metabolism; tetrahydrofolate interconversion. It participates in amino-acid biosynthesis; glycine biosynthesis; glycine from L-serine: step 1/1. In terms of biological role, catalyzes the reversible interconversion of serine and glycine with tetrahydrofolate (THF) serving as the one-carbon carrier. This reaction serves as the major source of one-carbon groups required for the biosynthesis of purines, thymidylate, methionine, and other important biomolecules. Also exhibits THF-independent aldolase activity toward beta-hydroxyamino acids, producing glycine and aldehydes, via a retro-aldol mechanism. The sequence is that of Serine hydroxymethyltransferase from Kineococcus radiotolerans (strain ATCC BAA-149 / DSM 14245 / SRS30216).